A 420-amino-acid polypeptide reads, in one-letter code: Beta-arrestin-2 (420 aa).

Phosphotyrosine is present on Tyr-48. A hydroxyproline; by PHD2 mark is found at Pro-176 and Pro-181. The interval 240-409 (ADICLFSTAQ…EDFARLRLKG (170 aa)) is interaction with TRAF6. Ser-360 bears the Phosphoserine mark. An interaction with AP2B1 region spans residues 374–420 (PETDAPVDTNLIEFETNYATDDDIVFEDFARLRLKGLKDEDYDDQFC). Thr-393 is subject to Phosphothreonine. Positions 396–406 (DIVFEDFARLR) match the [DE]-X(1,2)-F-X-X-[FL]-X-X-X-R motif motif.

This sequence belongs to the arrestin family. In terms of assembly, homooligomer; the self-association is mediated by InsP6-binding. Heterooligomer with ARRB1; the association is mediated by InsP6-binding. Interacts with ADRB2 and CHRM2. Interacts with PDE4A. Interacts with PDE4D. Interacts with MAPK10, MAPK1 and MAPK3. Interacts with DRD2. Interacts with FSHR. Interacts with CLTC. Interacts with HTR2C. Interacts with CRR5. Interacts with CXCR4. Interacts with SRC. Interacts with DUSP16; the interaction is interrupted by stimulation of AGTR1 and activation of MAPK10. Interacts with CHUK; the interaction is enhanced stimulation of ADRB2. Interacts with RELA. Interacts with MDM2; the interaction is enhanced by activation of GPCRs. Interacts with SLC9A5. Interacts with TRAF6. Interacts with IGF1R. Interacts with ENG. Interacts with KIR2DL1, KIR2DL3 and KIR2DL4. Interacts with LDLR. Interacts with AP2B1. Interacts with C5AR1. Interacts with RAF1. Interacts with MAP2K1. Interacts with MAPK1. Interacts with MAPK10; the interaction enhances MAPK10 activation by MAP3K5. Interacts with MAP2K4; the interaction is enhanced by presence of MAP3K5 and MAPK10. Interacts with MAP3K5. Interacts with AKT1. Interacts with IKBKB and MAP3K14. Interacts with SMO (activated). Interacts with GSK3A and GSK3B. Associates with protein phosphatase 2A (PP2A). Interacts with CXCR4; the interaction is dependent on C-terminal phosphorylation of CXCR4 and allows activation of MAPK1 and MAPK3. Interacts with GPR143. Interacts with HCK and CXCR1 (phosphorylated). Interacts with ACKR3 and ACKR4. Interacts with ARRDC1; the interaction is direct. Interacts with GPR61, GPR62 and GPR135. Interacts (via NACHT and LRR domains) with NLRP3; this interaction is direct and inducible by omega-3 polyunsaturated fatty acids (PUFAs). Interacts with FFAR4 (via C-terminus); this interaction is stimulated by long-chain fatty acids (LCFAs). Interacts with GPR35. Interacts with GPR84. Interacts with TIGIT; this interaction inhibits the NF-kappa-B pathway. Interacts with TGFBR3. In terms of processing, phosphorylated at Thr-382 in the cytoplasm; probably dephosphorylated at the plasma membrane. The phosphorylation does not regulate internalization and recycling of ADRB2, interaction with clathrin or AP2B1. The ubiquitination status appears to regulate the formation and trafficking of beta-arrestin-GPCR complexes and signaling. Ubiquitination appears to occur GPCR-specific. Ubiquitinated by MDM2; the ubiquitination is required for rapid internalization of ADRB2. Deubiquitinated by USP33; the deubiquitination leads to a dissociation of the beta-arrestin-GPCR complex. Stimulation of a class A GPCR, such as ADRB2, induces transient ubiquitination and subsequently promotes association with USP33. Stimulation of a class B GPCR promotes a sustained ubiquitination. Deubiquitinated by USP20; allowing USP20 to deubiquitinate TRAF6 leading to inhibition of NF-kappa-B signaling. Post-translationally, hydroxylation by PHD2 modulates the rate of internalization by slowing down recruitment to the plasma membrane and inhibiting subsequent co-internalization with class A receptors. In terms of tissue distribution, found in a variety of tissues. The short isoform is the most abundant form in all tissues.

The protein localises to the cytoplasm. It localises to the nucleus. It is found in the cell membrane. The protein resides in the membrane. Its subcellular location is the clathrin-coated pit. The protein localises to the cytoplasmic vesicle. Functions in regulating agonist-mediated G-protein coupled receptor (GPCR) signaling by mediating both receptor desensitization and resensitization processes. During homologous desensitization, beta-arrestins bind to the GPRK-phosphorylated receptor and sterically preclude its coupling to the cognate G-protein; the binding appears to require additional receptor determinants exposed only in the active receptor conformation. The beta-arrestins target many receptors for internalization by acting as endocytic adapters (CLASPs, clathrin-associated sorting proteins) and recruiting the GPRCs to the adapter protein 2 complex 2 (AP-2) in clathrin-coated pits (CCPs). However, the extent of beta-arrestin involvement appears to vary significantly depending on the receptor, agonist and cell type. Internalized arrestin-receptor complexes traffic to intracellular endosomes, where they remain uncoupled from G-proteins. Two different modes of arrestin-mediated internalization occur. Class A receptors, like ADRB2, OPRM1, ENDRA, D1AR and ADRA1B dissociate from beta-arrestin at or near the plasma membrane and undergo rapid recycling. Class B receptors, like AVPR2, AGTR1, NTSR1, TRHR and TACR1 internalize as a complex with arrestin and traffic with it to endosomal vesicles, presumably as desensitized receptors, for extended periods of time. Receptor resensitization then requires that receptor-bound arrestin is removed so that the receptor can be dephosphorylated and returned to the plasma membrane. Mediates endocytosis of CCR7 following ligation of CCL19 but not CCL21. Involved in internalization of P2RY1, P2RY4, P2RY6 and P2RY11 and ATP-stimulated internalization of P2RY2. Involved in phosphorylation-dependent internalization of OPRD1 and subsequent recycling or degradation. Involved in ubiquitination of IGF1R. Beta-arrestins function as multivalent adapter proteins that can switch the GPCR from a G-protein signaling mode that transmits short-lived signals from the plasma membrane via small molecule second messengers and ion channels to a beta-arrestin signaling mode that transmits a distinct set of signals that are initiated as the receptor internalizes and transits the intracellular compartment. Acts as a signaling scaffold for MAPK pathways such as MAPK1/3 (ERK1/2) and MAPK10 (JNK3). ERK1/2 and JNK3 activated by the beta-arrestin scaffold are largely excluded from the nucleus and confined to cytoplasmic locations such as endocytic vesicles, also called beta-arrestin signalosomes. Acts as a signaling scaffold for the AKT1 pathway. GPCRs for which the beta-arrestin-mediated signaling relies on both ARRB1 and ARRB2 (codependent regulation) include ADRB2, F2RL1 and PTH1R. For some GPCRs the beta-arrestin-mediated signaling relies on either ARRB1 or ARRB2 and is inhibited by the other respective beta-arrestin form (reciprocal regulation). Increases ERK1/2 signaling in AGTR1- and AVPR2-mediated activation (reciprocal regulation). Involved in CCR7-mediated ERK1/2 signaling involving ligand CCL19. Is involved in type-1A angiotensin II receptor/AGTR1-mediated ERK activity. Is involved in type-1A angiotensin II receptor/AGTR1-mediated MAPK10 activity. Is involved in dopamine-stimulated AKT1 activity in the striatum by disrupting the association of AKT1 with its negative regulator PP2A. Involved in AGTR1-mediated chemotaxis. Appears to function as signaling scaffold involved in regulation of MIP-1-beta-stimulated CCR5-dependent chemotaxis. Involved in attenuation of NF-kappa-B-dependent transcription in response to GPCR or cytokine stimulation by interacting with and stabilizing CHUK. Suppresses UV-induced NF-kappa-B-dependent activation by interacting with CHUK. The function is promoted by stimulation of ADRB2 and dephosphorylation of ARRB2. Involved in p53/TP53-mediated apoptosis by regulating MDM2 and reducing the MDM2-mediated degradation of p53/TP53. May serve as nuclear messenger for GPCRs. Upon stimulation of OR1D2, may be involved in regulation of gene expression during the early processes of fertilization. Also involved in regulation of receptors other than GPCRs. Involved in endocytosis of TGFBR2 and TGFBR3 and down-regulates TGF-beta signaling such as NF-kappa-B activation. Involved in endocytosis of low-density lipoprotein receptor/LDLR. Involved in endocytosis of smoothened homolog/Smo, which also requires GRK2. Involved in endocytosis of SLC9A5. Involved in endocytosis of ENG and subsequent TGF-beta-mediated ERK activation and migration of epithelial cells. Involved in Toll-like receptor and IL-1 receptor signaling through the interaction with TRAF6 which prevents TRAF6 autoubiquitination and oligomerization required for activation of NF-kappa-B and JUN. Involved in insulin resistance by acting as insulin-induced signaling scaffold for SRC, AKT1 and INSR. Involved in regulation of inhibitory signaling of natural killer cells by recruiting PTPN6 and PTPN11 to KIR2DL1. Involved in IL8-mediated granule release in neutrophils. Involved in the internalization of the atypical chemokine receptor ACKR3. Acts as an adapter protein coupling FFAR4 receptor to specific downstream signaling pathways, as well as mediating receptor endocytosis. During the activation step of NLRP3 inflammasome, directly associates with NLRP3 leading to inhibition of pro-inflammatory cytokine release and inhibition of inflammation. The protein is Beta-arrestin-2 (ARRB2) of Bos taurus (Bovine).